Here is a 350-residue protein sequence, read N- to C-terminus: Probable arabinogalactan endo-beta-1,4-galactanase A (350 aa).

The N-terminal stretch at 1-16 is a signal peptide; it reads MIYSLLLSALPLLSSA. A glycan (N-linked (GlcNAc...) asparagine) is linked at asparagine 128. Glutamate 152 serves as the catalytic Proton donor. Glutamate 262 (nucleophile) is an active-site residue.

It belongs to the glycosyl hydrolase 53 family.

The protein localises to the secreted. The catalysed reaction is The enzyme specifically hydrolyzes (1-&gt;4)-beta-D-galactosidic linkages in type I arabinogalactans.. In terms of biological role, endogalactanase involved in the degradation of plant cell wall polysaccharides, and more particularly of hairy regions of pectin. This is Probable arabinogalactan endo-beta-1,4-galactanase A (galA) from Aspergillus niger (strain ATCC MYA-4892 / CBS 513.88 / FGSC A1513).